Here is a 338-residue protein sequence, read N- to C-terminus: MKKSAFFGSVALAALVAGAASASTLDDVKARGQLICGSNPGLTGFAAPDANGVYQGFDVAVCKAVAAAVLGDPMKVKYVPLTGETRFTALASGEVDVLVRNSTWTFSRDTELALDFVAVNYYDGQGFMVNKSLGVSSAKELDGATICVQTGTTTEMNLADFFKANNMTYTPVNIADDAEGQQKFAAGACDSYTTDASGLASSRATLPNAADIVILPEIISKEPLGPVVRHGDNNWGDIVRWSFYALVAAEEYGITKANLEEVAASTQNPEIRRLLGLEGDMGKKIGLDNDFAKRAILASGNYGEVFEANIGASTSIGLARGLNAQWTQGGLMYAPPFR.

The first 22 residues, 1-22 (MKKSAFFGSVALAALVAGAASA), serve as a signal peptide directing secretion.

It belongs to the bacterial solute-binding protein 3 family.

It localises to the periplasm. Functionally, part of a binding-protein-dependent transport system for glutamate, glutamine, aspartate and asparagine. The chain is Glutamate/glutamine/aspartate/asparagine-binding protein BztA (bztA) from Rhodobacter capsulatus (strain ATCC BAA-309 / NBRC 16581 / SB1003).